A 384-amino-acid polypeptide reads, in one-letter code: Chaperone protein DnaJ (384 aa).

One can recognise a J domain in the interval 5–70 (DFYQVLGVSK…QKRQMYDQYG (66 aa)). A CR-type zinc finger spans residues 138-216 (GKTVELEIPT…CHGHGRKEET (79 aa)). The Zn(2+) site is built by Cys151, Cys154, Cys168, Cys171, Cys190, Cys193, Cys204, and Cys207. CXXCXGXG motif repeat units follow at residues 151-158 (CRDCNGSG), 168-175 (CGHCHGSG), 190-197 (CPQCRGTG), and 204-211 (CRTCHGHG).

The protein belongs to the DnaJ family. As to quaternary structure, homodimer. It depends on Zn(2+) as a cofactor.

The protein localises to the cytoplasm. Functionally, participates actively in the response to hyperosmotic and heat shock by preventing the aggregation of stress-denatured proteins and by disaggregating proteins, also in an autonomous, DnaK-independent fashion. Unfolded proteins bind initially to DnaJ; upon interaction with the DnaJ-bound protein, DnaK hydrolyzes its bound ATP, resulting in the formation of a stable complex. GrpE releases ADP from DnaK; ATP binding to DnaK triggers the release of the substrate protein, thus completing the reaction cycle. Several rounds of ATP-dependent interactions between DnaJ, DnaK and GrpE are required for fully efficient folding. Also involved, together with DnaK and GrpE, in the DNA replication of plasmids through activation of initiation proteins. In Idiomarina loihiensis (strain ATCC BAA-735 / DSM 15497 / L2-TR), this protein is Chaperone protein DnaJ.